The following is a 465-amino-acid chain: Cysteine--tRNA ligase (465 aa).

Residue C27 participates in Zn(2+) binding. The 'HIGH' region signature appears at 29–39 (PTVYNFFHIGN). Residues C207, H232, and E236 each coordinate Zn(2+). The 'KMSKS' region motif lies at 264 to 268 (KMSKS). Residue K267 participates in ATP binding.

The protein belongs to the class-I aminoacyl-tRNA synthetase family. In terms of assembly, monomer. The cofactor is Zn(2+).

It localises to the cytoplasm. The enzyme catalyses tRNA(Cys) + L-cysteine + ATP = L-cysteinyl-tRNA(Cys) + AMP + diphosphate. The polypeptide is Cysteine--tRNA ligase (Clostridium botulinum (strain Loch Maree / Type A3)).